The sequence spans 500 residues: L-arabinose isomerase (500 aa).

Mn(2+) contacts are provided by glutamate 306, glutamate 333, histidine 349, and histidine 448.

It belongs to the arabinose isomerase family. The cofactor is Mn(2+).

It catalyses the reaction beta-L-arabinopyranose = L-ribulose. The protein operates within carbohydrate degradation; L-arabinose degradation via L-ribulose; D-xylulose 5-phosphate from L-arabinose (bacterial route): step 1/3. Its function is as follows. Catalyzes the conversion of L-arabinose to L-ribulose. The chain is L-arabinose isomerase from Koribacter versatilis (strain Ellin345).